The following is a 441-amino-acid chain: Chitinase-like protein Idgf3 (441 aa).

The first 23 residues, 1-23, serve as a signal peptide directing secretion; sequence MTGSLWLSLALSLAVLAQFKVSA. Positions 25 to 441 constitute a GH18 domain; the sequence is PNLVCFYDSQ…MLRAIKYRLL (417 aa). Cysteines 29 and 56 form a disulfide. N-linked (GlcNAc...) asparagine glycosylation is present at asparagine 221. Positions 309–331 are disordered; sequence SGDSGMPVVPSTQGPAPAGPQSK. Cysteine 342 and cysteine 425 are oxidised to a cystine.

This sequence belongs to the glycosyl hydrolase 18 family. IDGF subfamily. Post-translationally, glycosylated.

The protein localises to the secreted. Cooperates with insulin-like peptides to stimulate the proliferation, polarization and motility of imaginal disk cells. May act by stabilizing the binding of insulin-like peptides to its receptor through a simultaneous interaction with both molecules to form a multiprotein signaling complex. This Drosophila yakuba (Fruit fly) protein is Chitinase-like protein Idgf3 (Idgf3).